Consider the following 279-residue polypeptide: Cell division protein FtsQ (279 aa).

A disordered region spans residues methionine 1–aspartate 28. At methionine 1–arginine 48 the chain is on the cytoplasmic side. The helical transmembrane segment at valine 49–glycine 69 threads the bilayer. Over valine 70–glycine 279 the chain is Periplasmic. The POTRA domain maps to arginine 75–glutamate 144.

Belongs to the FtsQ/DivIB family. FtsQ subfamily. Part of a complex composed of FtsB, FtsL and FtsQ.

It is found in the cell inner membrane. Functionally, essential cell division protein. May link together the upstream cell division proteins, which are predominantly cytoplasmic, with the downstream cell division proteins, which are predominantly periplasmic. May control correct divisome assembly. This Hahella chejuensis (strain KCTC 2396) protein is Cell division protein FtsQ.